A 400-amino-acid chain; its full sequence is tRNA(Met) cytidine acetate ligase (400 aa).

ATP-binding positions include 7 to 20 (ITEYNPLHKGHIYH), glycine 102, asparagine 165, and arginine 190.

The protein belongs to the TmcAL family.

It localises to the cytoplasm. It carries out the reaction cytidine(34) in elongator tRNA(Met) + acetate + ATP = N(4)-acetylcytidine(34) in elongator tRNA(Met) + AMP + diphosphate. Functionally, catalyzes the formation of N(4)-acetylcytidine (ac(4)C) at the wobble position of elongator tRNA(Met), using acetate and ATP as substrates. First activates an acetate ion to form acetyladenylate (Ac-AMP) and then transfers the acetyl group to tRNA to form ac(4)C34. The polypeptide is tRNA(Met) cytidine acetate ligase (Clostridium novyi (strain NT)).